Consider the following 204-residue polypeptide: Somatotropin (204 aa).

The signal sequence occupies residues 1-17; that stretch reads MDRVVLLLSVLSLGVSS. Gln-18 carries the post-translational modification Pyrrolidone carboxylic acid. His-36 serves as a coordination point for Zn(2+). A disulfide bridge links Cys-69 with Cys-177. Glu-186 is a Zn(2+) binding site. Cys-194 and Cys-202 are oxidised to a cystine.

Belongs to the somatotropin/prolactin family.

The protein resides in the secreted. Growth hormone plays an important role in growth control and is involved in the regulation of several anabolic processes. Implicated as an osmoregulatory substance important for seawater adaptation. In Lates calcarifer (Barramundi), this protein is Somatotropin (gh).